The sequence spans 329 residues: GTP 3',8-cyclase (329 aa).

A Radical SAM core domain is found at 8 to 229 (AFARTFYYLR…AGWQRRLPGR (222 aa)). Residue arginine 17 participates in GTP binding. Positions 24 and 28 each coordinate [4Fe-4S] cluster. Position 30 (tyrosine 30) interacts with S-adenosyl-L-methionine. Cysteine 31 provides a ligand contact to [4Fe-4S] cluster. Arginine 68 is a GTP binding site. Glycine 72 is a binding site for S-adenosyl-L-methionine. Residue threonine 99 coordinates GTP. Serine 123 contributes to the S-adenosyl-L-methionine binding site. Lysine 160 contributes to the GTP binding site. Methionine 194 provides a ligand contact to S-adenosyl-L-methionine. [4Fe-4S] cluster is bound by residues cysteine 257 and cysteine 260. Residue 262 to 264 (RLR) coordinates GTP. Cysteine 274 contributes to the [4Fe-4S] cluster binding site.

It belongs to the radical SAM superfamily. MoaA family. Monomer and homodimer. [4Fe-4S] cluster is required as a cofactor.

The catalysed reaction is GTP + AH2 + S-adenosyl-L-methionine = (8S)-3',8-cyclo-7,8-dihydroguanosine 5'-triphosphate + 5'-deoxyadenosine + L-methionine + A + H(+). Its pathway is cofactor biosynthesis; molybdopterin biosynthesis. In terms of biological role, catalyzes the cyclization of GTP to (8S)-3',8-cyclo-7,8-dihydroguanosine 5'-triphosphate. The polypeptide is GTP 3',8-cyclase (Edwardsiella ictaluri (strain 93-146)).